A 493-amino-acid chain; its full sequence is Alpha-amylase-related protein (493 aa).

The signal sequence occupies residues 1–19 (MFKFALTLTLCLAGSLSLA). Q20 is modified (pyrrolidone carboxylic acid). C47 and C103 form a disulfide bridge. Ca(2+)-binding residues include N117, Q168, and D177. Residues C156 and C170 are joined by a disulfide bond. R205 contacts chloride. The Nucleophile role is filled by D207. Position 211 (H211) interacts with Ca(2+). E244 (proton donor) is an active-site residue. Residues N307 and R342 each coordinate chloride. Intrachain disulfides connect C375–C381, C417–C440, and C447–C459.

The protein belongs to the glycosyl hydrolase 13 family. In terms of assembly, monomer. The cofactor is Ca(2+). Chloride serves as cofactor.

Its subcellular location is the secreted. The catalysed reaction is Endohydrolysis of (1-&gt;4)-alpha-D-glucosidic linkages in polysaccharides containing three or more (1-&gt;4)-alpha-linked D-glucose units.. The chain is Alpha-amylase-related protein (Amyrel) from Drosophila simulans (Fruit fly).